A 949-amino-acid polypeptide reads, in one-letter code: Sensor histidine kinase RcsC (949 aa).

The Cytoplasmic segment spans residues 1 to 19; sequence MKYLASFRTTLKASRYMFR. Residues 20–41 form a helical membrane-spanning segment; sequence ALALVLWLLIAFSSVFYIVNAL. Residues 42-313 lie on the Periplasmic side of the membrane; the sequence is HQRESEIRQE…PVDKVLERIR (272 aa). The chain crosses the membrane as a helical span at residues 314-335; it reads MLILNAILLNVLAGAALFTLAR. Topologically, residues 336–949 are cytoplasmic; that stretch reads MYERRIFIPA…AERVRKSRDS (614 aa). The PAS domain maps to 357–425; that stretch reads QFNRKIVASA…VLTSNNTNLQ (69 aa). The Histidine kinase domain maps to 476 to 692; sequence TVSHELRTPL…QFTVRIPLYG (217 aa). Phosphohistidine; by autocatalysis is present on H479. The ABL domain maps to 705–805; it reads SGKRCWLAVR…ARIYLIEMES (101 aa). The 115-residue stretch at 826–940 folds into the Response regulatory domain; that stretch reads MILVVDDHPI…VIKQTLTLYA (115 aa). D875 is modified (4-aspartylphosphate).

Belongs to the RcsC family. As to quaternary structure, interacts with RcsD. In terms of processing, autophosphorylated. Activation probably requires a transfer of a phosphate group from a His in the transmitter domain to an Asp in the receiver domain.

The protein resides in the cell inner membrane. The catalysed reaction is ATP + protein L-histidine = ADP + protein N-phospho-L-histidine.. With respect to regulation, the Rcs phosphorelay may be activated by RcsF. DjlA, LolA and OmpG might act as a regulator of the phosphorelay. Activity is probably up-regulated by YmgA/AriR, and possibly down-regulated by YcgZ, all 3 are connector proteins providing additional signal input into signaling system. In terms of biological role, component of the Rcs signaling system, which controls transcription of numerous genes. RcsC functions as a membrane-associated protein kinase that phosphorylates RcsD in response to environmental signals. The phosphoryl group is then transferred to the response regulator RcsB. RcsC also has phosphatase activity. The system controls expression of genes involved in colanic acid capsule synthesis, biofilm formation and cell division. This is Sensor histidine kinase RcsC from Escherichia coli (strain K12).